The chain runs to 134 residues: D-ribose pyranase (134 aa).

Residue His20 is the Proton donor of the active site. Substrate-binding positions include Asp28, His101, and 123–125 (YCN).

It belongs to the RbsD / FucU family. RbsD subfamily. In terms of assembly, homodecamer.

Its subcellular location is the cytoplasm. It carries out the reaction beta-D-ribopyranose = beta-D-ribofuranose. It functions in the pathway carbohydrate metabolism; D-ribose degradation; D-ribose 5-phosphate from beta-D-ribopyranose: step 1/2. Catalyzes the interconversion of beta-pyran and beta-furan forms of D-ribose. In Pseudomonas fluorescens (strain ATCC BAA-477 / NRRL B-23932 / Pf-5), this protein is D-ribose pyranase.